We begin with the raw amino-acid sequence, 93 residues long: Phosphoribosyl-ATP pyrophosphatase (93 aa).

The protein belongs to the PRA-PH family.

The protein localises to the cytoplasm. It catalyses the reaction 1-(5-phospho-beta-D-ribosyl)-ATP + H2O = 1-(5-phospho-beta-D-ribosyl)-5'-AMP + diphosphate + H(+). The protein operates within amino-acid biosynthesis; L-histidine biosynthesis; L-histidine from 5-phospho-alpha-D-ribose 1-diphosphate: step 2/9. In Corynebacterium aurimucosum (strain ATCC 700975 / DSM 44827 / CIP 107346 / CN-1) (Corynebacterium nigricans), this protein is Phosphoribosyl-ATP pyrophosphatase.